The following is a 691-amino-acid chain: Elongation factor G (691 aa).

Residues 12 to 286 (NKLRNIGIMA…GIVRYLPSPL (275 aa)) form the tr-type G domain. GTP is bound by residues 21-28 (AHIDAGKT), 85-89 (DTPGH), and 139-142 (NKMD).

Belongs to the TRAFAC class translation factor GTPase superfamily. Classic translation factor GTPase family. EF-G/EF-2 subfamily.

It localises to the cytoplasm. In terms of biological role, catalyzes the GTP-dependent ribosomal translocation step during translation elongation. During this step, the ribosome changes from the pre-translocational (PRE) to the post-translocational (POST) state as the newly formed A-site-bound peptidyl-tRNA and P-site-bound deacylated tRNA move to the P and E sites, respectively. Catalyzes the coordinated movement of the two tRNA molecules, the mRNA and conformational changes in the ribosome. The sequence is that of Elongation factor G from Fervidobacterium nodosum (strain ATCC 35602 / DSM 5306 / Rt17-B1).